Here is an 848-residue protein sequence, read N- to C-terminus: Beta-galactosidase 13 (848 aa).

Positions 1–27 are cleaved as a signal peptide; sequence MKIHSSDHSWLLLAVLVILLSFSGALS. Asn-107 is a glycosylation site (N-linked (GlcNAc...) asparagine). The active-site Proton donor is the Glu-200. Glu-271 functions as the Nucleophile in the catalytic mechanism. N-linked (GlcNAc...) asparagine glycosylation is found at Asn-272, Asn-303, Asn-376, Asn-398, Asn-782, Asn-787, and Asn-817. Residues 754–843 form the SUEL-type lectin domain; that stretch reads DDVHLTANLK…KKLAVQVKCG (90 aa).

The protein belongs to the glycosyl hydrolase 35 family. Ubiquitous, with higher expression levels in roots, flowers and siliques.

It is found in the secreted. The protein localises to the extracellular space. The protein resides in the apoplast. The enzyme catalyses Hydrolysis of terminal non-reducing beta-D-galactose residues in beta-D-galactosides.. This is Beta-galactosidase 13 (BGAL13) from Arabidopsis thaliana (Mouse-ear cress).